A 75-amino-acid polypeptide reads, in one-letter code: MTKEKISVTVDAAVLAAIDADARAAGLNRSEMIEQALRNEHLRVALRDYTAKTVPALDIDAYAQRVYQANRAAGS.

Antitoxin component of a type II toxin-antitoxin (TA) system. The polypeptide is Antitoxin MT0312 (Mycobacterium tuberculosis (strain CDC 1551 / Oshkosh)).